The sequence spans 564 residues: MKVSQFFLATVKETPADAVLASHQLMIRAGMLRKLASGLYTWLPLGLRVLQKVADVVREEMNRAGALELLMPIVQPASLWQESGRWEAYGAELLRIMDRHQNGFCFGPTHEEVITDIARQELKSYKQLPLNFYQIQTKFRDEIRPRFGVMRSREFLMKDAYSFDLDEKGMQAAYEKMFDAYRRIFTRLGLNFRAVLADTGAIGGDYSHEFQVLADVGEDTVVYSDESDYAANIEKAAAQAPQGERVKPVAEIKKIATPGVRTIKQLADKANILPEKGVKTLIVKGDESSLIALILRGDHELNDVKAQHLPGVAFPLQFADEKEIREAIGCGPGSLGPVNLPIPFIVDRDAAQLVDFSCGANEDDFHWINVNWERDVPLGSVADIRKVVEGDISPDGKGRLRFARGIEVGQVFQLGDKYSRKMNATVVDELGKSRYLQMGCYGIGVSRTVAAAIEQNHDERGIIWPTPMAPFFIALVPVNMHKSYRVREACEKLYNELIDAGYEVLWDDRKERPGVMFADMDLIGIPHRLVISESGLDRGIVEYKARKSKEAENVSLENVLSVFR.

The protein belongs to the class-II aminoacyl-tRNA synthetase family. ProS type 1 subfamily. In terms of assembly, homodimer.

It is found in the cytoplasm. It catalyses the reaction tRNA(Pro) + L-proline + ATP = L-prolyl-tRNA(Pro) + AMP + diphosphate. Catalyzes the attachment of proline to tRNA(Pro) in a two-step reaction: proline is first activated by ATP to form Pro-AMP and then transferred to the acceptor end of tRNA(Pro). As ProRS can inadvertently accommodate and process non-cognate amino acids such as alanine and cysteine, to avoid such errors it has two additional distinct editing activities against alanine. One activity is designated as 'pretransfer' editing and involves the tRNA(Pro)-independent hydrolysis of activated Ala-AMP. The other activity is designated 'posttransfer' editing and involves deacylation of mischarged Ala-tRNA(Pro). The misacylated Cys-tRNA(Pro) is not edited by ProRS. This is Proline--tRNA ligase from Coxiella burnetii (strain Dugway 5J108-111).